The chain runs to 341 residues: MRIVIFILGILLTSCFAGNEIESGSSKIKISMLVDGVLDDKSFNSSANRALLRLEEDFPENIEKVFSSAASGVYSSYVSDLDNLKMNGSDLIWLVGYMLTDASLSVSLENPKISYGIIDPVYSDDVQIPKNLIGVVFRIEQGAFLAGYIAAKKSVSGKIGFIGGVKGDIVDAFRYGYEAGAKYADKGIEIVSEYSNSFSDVNIGRAIANKMYAKGIDIIHFAAGLAGIGVIEAAKELGDGYYVIGADQDQSHLAPRNFITSVIKNVGDALYLVTSEYLKNNNTWEGGKIIQMGLRDGVVGLSNANKFEYIKVIERKIVNEEIIVPYNHEGYEIFIKQILKL.

Residues 1-14 (MRIVIFILGILLTS) form the signal peptide. The N-palmitoyl cysteine moiety is linked to residue Cys-15. Cys-15 carries S-diacylglycerol cysteine lipidation.

The protein belongs to the BMP lipoprotein family. As to quaternary structure, monomer.

Its subcellular location is the cell inner membrane. Its function is as follows. May be part of an ABC-type nucleoside uptake system involved in the purine salvage pathway. The sequence is that of Basic membrane protein B (bmpB) from Borrelia garinii subsp. bavariensis (strain ATCC BAA-2496 / DSM 23469 / PBi) (Borreliella bavariensis).